We begin with the raw amino-acid sequence, 146 residues long: MIFEVKSPILGFESVAKMKLEKIDDLFMKLYNAEGEVPHFTLVNPFLLREYEFDVPASIKILLDLSDAKNLLIANIMVIQQPIENSTINFLAPLIFNFDNLTMAQVVLDSTQYPLYSLNEPIGKYYDKEEAQKGEQAAPVRDSQKK.

This sequence belongs to the FliW family. In terms of assembly, interacts with translational regulator CsrA and flagellin(s).

The protein resides in the cytoplasm. Acts as an anti-CsrA protein, binds CsrA and prevents it from repressing translation of its target genes, one of which is flagellin. Binds to flagellin and participates in the assembly of the flagellum. The protein is Flagellar assembly factor FliW 1 of Helicobacter hepaticus (strain ATCC 51449 / 3B1).